Here is a 72-residue protein sequence, read N- to C-terminus: Antimicrobial peptide MeuNaTxbeta-4 (72 aa).

The N-terminal stretch at 1-5 (LIGVK) is a signal peptide. An LCN-type CS-alpha/beta domain is found at 7 to 69 (EHGYLLDKYT…LWHYETNKCN (63 aa)). 4 disulfides stabilise this stretch: cysteine 18–cysteine 68, cysteine 22–cysteine 43, cysteine 29–cysteine 50, and cysteine 33–cysteine 52.

As to expression, expressed by the venom gland.

The protein localises to the secreted. Its function is as follows. Antimicrobial peptide with weak activity against both Gram-positive and -negative bacteria. Its antibiotic activity is potentiated by other antibacterial peptides such as Meucin-49. The polypeptide is Antimicrobial peptide MeuNaTxbeta-4 (Mesobuthus eupeus (Lesser Asian scorpion)).